Reading from the N-terminus, the 310-residue chain is HMG box-containing protein C28F2.11 (310 aa).

Low complexity predominate over residues 69 to 95 (ESPSKKATSPKKATPAAVAPVEATSAV). The segment at 69-310 (ESPSKKATSP…TTPPTAKVAN (242 aa)) is disordered. A Phosphoserine modification is found at serine 70. Threonine 105 carries the phosphothreonine modification. The segment at residues 117-187 (PKRPPSAYNL…AYEEEMAAYN (71 aa)) is a DNA-binding region (HMG box). Composition is skewed to basic and acidic residues over residues 131–178 (QRSE…LREA) and 200–226 (VTAEETSTKPSEDLSSPTKKDLIDFSE). Phosphoserine is present on residues serine 161, serine 214, and serine 215. Threonine 217 and threonine 237 each carry phosphothreonine. Positions 255 to 268 (STVPTSNVEPVSQP) are enriched in polar residues. Residues serine 271, serine 278, serine 294, serine 295, and serine 297 each carry the phosphoserine modification. Threonine 302 and threonine 305 each carry phosphothreonine.

It localises to the cytoplasm. The polypeptide is HMG box-containing protein C28F2.11 (Schizosaccharomyces pombe (strain 972 / ATCC 24843) (Fission yeast)).